The following is a 336-amino-acid chain: Ornithine carbamoyltransferase, catabolic (336 aa).

Carbamoyl phosphate-binding positions include 57–60, Gln84, Arg108, and 136–139; these read STRT and HPTQ. Residues Asn169, Asp233, and 237–238 contribute to the L-ornithine site; that span reads SM. Carbamoyl phosphate contacts are provided by residues 275 to 276 and Arg322; that span reads CL.

Belongs to the aspartate/ornithine carbamoyltransferase superfamily. OTCase family.

It is found in the cytoplasm. The catalysed reaction is carbamoyl phosphate + L-ornithine = L-citrulline + phosphate + H(+). Its pathway is amino-acid degradation; L-arginine degradation via ADI pathway; carbamoyl phosphate from L-arginine: step 2/2. In terms of biological role, reversibly catalyzes the transfer of the carbamoyl group from carbamoyl phosphate (CP) to the N(epsilon) atom of ornithine (ORN) to produce L-citrulline. This chain is Ornithine carbamoyltransferase, catabolic, found in Chromobacterium violaceum (strain ATCC 12472 / DSM 30191 / JCM 1249 / CCUG 213 / NBRC 12614 / NCIMB 9131 / NCTC 9757 / MK).